Consider the following 284-residue polypeptide: Formyltetrahydrofolate deformylase (284 aa).

Residues 7–90 (TLLVSCPDQP…QIHFSDQLPR (84 aa)) enclose the ACT domain. Asp228 is a catalytic residue.

This sequence belongs to the PurU family.

It catalyses the reaction (6R)-10-formyltetrahydrofolate + H2O = (6S)-5,6,7,8-tetrahydrofolate + formate + H(+). It functions in the pathway purine metabolism; IMP biosynthesis via de novo pathway; formate from 10-formyl-5,6,7,8-tetrahydrofolate: step 1/1. Its function is as follows. Catalyzes the hydrolysis of 10-formyltetrahydrofolate (formyl-FH4) to formate and tetrahydrofolate (FH4). The sequence is that of Formyltetrahydrofolate deformylase from Synechocystis sp. (strain ATCC 27184 / PCC 6803 / Kazusa).